We begin with the raw amino-acid sequence, 266 residues long: MQTDNTKSNTNKTAKQEWGSFVFVICIALLIRILIMEPFTVPTGSMKATILENDYIFSTKYSYGYSNYSLSFFDFIPLFKGRIFAREPERGDIVVFRPPHDMSVRYIKRLIGLPGDKIQLIDDVIYINDKKIERTEVGTYISEEGIKYLKFKETLPNGRTYFSYKLAPIYGVIYNDRYGNTDVFYVPEGKYFFLGDNRDQSNDSRVNLGFVPFENFIAKAQFIWFSTKITWWDNDIGVINLVLKLKPWIESVRLNRIFRNLYNTDV.

The Cytoplasmic segment spans residues 1–20 (MQTDNTKSNTNKTAKQEWGS). Residues 21-41 (FVFVICIALLIRILIMEPFTV) traverse the membrane as a helical segment. At 42 to 266 (PTGSMKATIL…IFRNLYNTDV (225 aa)) the chain is on the periplasmic side. Residues Ser-45 and Lys-108 contribute to the active site.

Belongs to the peptidase S26 family.

The protein resides in the cell inner membrane. The catalysed reaction is Cleavage of hydrophobic, N-terminal signal or leader sequences from secreted and periplasmic proteins.. This chain is Signal peptidase I (lepB), found in Rickettsia massiliae (strain Mtu5).